The primary structure comprises 174 residues: F-box protein At1g70360 (174 aa).

One can recognise an F-box domain in the interval 136–174 (PPCFISLPRELKHKILESLPGVDIGTLACVSSELRDMAS).

This Arabidopsis thaliana (Mouse-ear cress) protein is F-box protein At1g70360.